The following is a 236-amino-acid chain: Transcriptional activator protein SolR (236 aa).

The region spanning 169–234 (VPESNAVLTT…QAVVKAIATG (66 aa)) is the HTH luxR-type domain. The segment at residues 193-212 (AYEIGQILRISERTVNFHVN) is a DNA-binding region (H-T-H motif).

It belongs to the autoinducer-regulated transcriptional regulatory protein family.

The chain is Transcriptional activator protein SolR (solR) from Ralstonia solanacearum (Pseudomonas solanacearum).